Here is a 179-residue protein sequence, read N- to C-terminus: Ribulose bisphosphate carboxylase small subunit, chloroplastic 1/4 (179 aa).

Residues M1–Q58 constitute a chloroplast transit peptide.

Belongs to the RuBisCO small chain family. In terms of assembly, heterohexadecamer of 8 large and 8 small subunits.

The protein resides in the plastid. It is found in the chloroplast. Functionally, ruBisCO catalyzes two reactions: the carboxylation of D-ribulose 1,5-bisphosphate, the primary event in carbon dioxide fixation, as well as the oxidative fragmentation of the pentose substrate. Both reactions occur simultaneously and in competition at the same active site. Although the small subunit is not catalytic it is essential for maximal activity. The chain is Ribulose bisphosphate carboxylase small subunit, chloroplastic 1/4 (RBCS1) from Fritillaria agrestis (Stinkbells).